The following is a 1044-amino-acid chain: MSDWRLTENVLDQNIPETKPRESKTRLEEIQRLALFQEELDIIEELDDPVDVWYRCIEWLLETRFLGMETVNKMLDDAIQYLERCRFALNDVRHLLIQLAKIKQSYETPDELQQAAKQFYQLASKGIGLELALFYEEYGSLLIRMQRWKEASEVFHAAVSREARPLVRLLRNAAEFSRAYDLHNAHPSIHDAPYSSPFPPPRIVLGSKPVSSSTLPSKPKSFQVFSDASSSRDSQNASDLPQAKSLESEANTPNLPLLYDKSSGKRVEYSAFNFLALYENGEERSMEECRAQRYLSSIQPNTAASFPKVVPKNEISVHHDSSSSNVSPIYKNPVAEQSDTPTRSLPKNYAYVAKSTSPELKVFDTVMPVALSPKPAQKPPSPTIHTKAALADILDIFNQPLRSESLEKSSKSPISAQSSYLGTPLKNDENSSNSGATSLTGRSQEEHLDFIPSLTPSKNYPSKIYSPNKNLDFSHTASKAETYKNSNELENVKREQPFSELLPSTLQEETATGTTSTTFANAKRRPEDSNISPTNPKKLHTLPRSPQYSTVDSNSVLSPAMPKGYMFVNENQSMKHESSVSNPVATIPHENGKHDFGQLSPIEHKPFFPKNDDELPGPSGYLTMPYEEAMASLSNLPTLINPLDQSLRDLLFQVLRPSLLRDKDYHEHETSFALVEHIESFVSKIKPKAGGPGRRRSSNRHSLDGPEFHLFYPPNTNLSVISKLGQGAFAPVYLVKSKIETENGDVSQGGAENNESKLFALKIETPPSCFEFYLTRQAMTRLKGLRETNSILPVHQLHMFHDTSHLLMDYRPQGSILDLVNSMHNSTFSSSGMDEILVVFFSIEFLRIIEALHTHKIIHGDLKADNALLRLETVADSEWSPIYSPEGLYGWSFKGIYLIDFGRGIDLSLFEEKVKFIADWDTDLQDCIEMREGRPWTYQIDYHGLAAIIYTMLFGQYIETRIEVINGQRRQVLTQRMKRYWNQDLWHRLFDLLLNPTLHVSEENLPMTEELSKIRIEMEEWLVNHSTGGSGLKGLLKSIEKRKI.

In terms of domain architecture, BUB1 N-terminal spans 36-204 (FQEELDIIEE…SSPFPPPRIV (169 aa)). Disordered regions lie at residues 209-259 (PVSS…PLLY), 317-343 (VHHD…TPTR), 404-446 (ESLE…SQEE), 484-555 (KNSN…DSNS), and 685-705 (IKPK…SLDG). A compositionally biased stretch (polar residues) spans 223 to 239 (QVFSDASSSRDSQNASD). A compositionally biased stretch (polar residues) spans 430–442 (NSSNSGATSLTGR). Residues 504-518 (STLQEETATGTTSTT) are compositionally biased toward low complexity. Over residues 544–555 (RSPQYSTVDSNS) the composition is skewed to polar residues. Position 550 is a phosphothreonine (Thr-550). The Protein kinase domain maps to 718–1044 (LSVISKLGQG…LLKSIEKRKI (327 aa)). Ala-728, Phe-729, Ala-730, Lys-762, and Asp-809 together coordinate ATP. Asp-861 (proton acceptor) is an active-site residue. The ATP site is built by Asp-865, Asn-866, and Asp-900.

This sequence belongs to the protein kinase superfamily. Ser/Thr protein kinase family. BUB1 subfamily. Part of the BUB1-BUB3 complex, composed of bub1 and bub3. Interacts with spc7 (when phosphorylated on MELT motifs); to recruit the bub1-bub3 complex to kinetochores. Interacts with mad3. In terms of processing, autophosphorylated.

It is found in the nucleus. The protein localises to the chromosome. It localises to the centromere. The protein resides in the kinetochore. It catalyses the reaction L-seryl-[protein] + ATP = O-phospho-L-seryl-[protein] + ADP + H(+). It carries out the reaction L-threonyl-[protein] + ATP = O-phospho-L-threonyl-[protein] + ADP + H(+). Involved in mitotic spindle assembly checkpoint signaling, a process that delays anaphase until chromosomes are bioriented on the spindle, and in the repair of incorrect mitotic kinetochore-spindle microtubule attachments. Acts as a kinetochore scaffold for the recruitment of other spindle assembly checkpoint components. The polypeptide is Spindle assembly checkpoint serine/threonine-protein kinase bub1 (Schizosaccharomyces pombe (strain 972 / ATCC 24843) (Fission yeast)).